Reading from the N-terminus, the 222-residue chain is CEACAM1-like protein UL7 (222 aa).

Asn-50, Asn-56, Asn-60, Asn-71, Asn-105, Asn-109, Asn-125, Asn-132, Asn-147, Asn-164, Asn-168, and Asn-189 each carry an N-linked (GlcNAc...) asparagine; by host glycan. Residues 193–213 (LALVGVVVFLVLIVVCIMGWW) traverse the membrane as a helical segment.

It belongs to the RL11 family. In terms of processing, highly glycosylated.

It is found in the secreted. Its subcellular location is the host cell membrane. Its function is as follows. Plays a role in modulating the host immune response and affecting host cytokine production. Structurally and functionally homolog of host CEACAM1, induces endothelial cell angiogenesis. In Homo sapiens (Human), this protein is CEACAM1-like protein UL7 (UL7).